Consider the following 161-residue polypeptide: Disulfide bond formation protein B (161 aa).

Residues M1–Y8 are Cytoplasmic-facing. The helical transmembrane segment at F9–Y25 threads the bilayer. Topologically, residues L26 to F43 are periplasmic. The cysteines at positions 35 and 38 are disulfide-linked. Residues A44 to A58 traverse the membrane as a helical segment. Topologically, residues Q59–S63 are cytoplasmic. Residues L64–V81 traverse the membrane as a helical segment. Topologically, residues Y82 to A136 are periplasmic. An intrachain disulfide couples C94 to C122. The helical transmembrane segment at W137 to R155 threads the bilayer. At R156–R161 the chain is on the cytoplasmic side.

Belongs to the DsbB family.

Its subcellular location is the cell inner membrane. Required for disulfide bond formation in some periplasmic proteins. Acts by oxidizing the DsbA protein. The protein is Disulfide bond formation protein B of Cupriavidus necator (strain ATCC 17699 / DSM 428 / KCTC 22496 / NCIMB 10442 / H16 / Stanier 337) (Ralstonia eutropha).